Here is a 501-residue protein sequence, read N- to C-terminus: MLO-like protein 5 (501 aa).

The Extracellular portion of the chain corresponds to 1–22; the sequence is MAGGGGGSTSGEGPRELDQTPT. A helical transmembrane segment spans residues 23–43; it reads WAVSTVCGVIILISIVLELMI. Residues 44–68 lie on the Cytoplasmic side of the membrane; that stretch reads HKIGEVFTERRKKALYEALQKIKNE. The helical transmembrane segment at 69-89 threads the bilayer; it reads LMVLGFISLLLTFGQNYIASL. The Extracellular segment spans residues 90–151; that stretch reads CVASRYGHAM…ISLNALHQVH (62 aa). Residues 152-172 form a helical membrane-spanning segment; the sequence is IFIFFLAVFHVIYSAITMMLG. The Cytoplasmic portion of the chain corresponds to 173-273; it reads RAKIRGWKVW…IKRSLEDDFK (101 aa). Residues 274–294 form a helical membrane-spanning segment; it reads VVVGISPELWAFVMLFLLFDV. H295 is a topological domain (extracellular). A helical membrane pass occupies residues 296–316; it reads GWYVTAVITMIPPLLTLAIGT. The Cytoplasmic segment spans residues 317-359; sequence KLQAIISDMALEIQERHAVIQGMPLVNVSDRHFWFSRPALVLH. A helical membrane pass occupies residues 360–380; the sequence is IIHFILFQNAFEITYFFWIWY. The Extracellular segment spans residues 381-391; the sequence is EFGLRSCFHHH. Residues 392–412 traverse the membrane as a helical segment; the sequence is FALIIIRVALGVGVQFLCSYI. The Cytoplasmic segment spans residues 413-501; that stretch reads TLPLYALVTQ…SQSRDLLSGP (89 aa). The disordered stretch occupies residues 443–501; the sequence is WHKNAKKKSETPGQTQPPLPNLRPKTGGDIESASPANITASVDVKESDQSQSRDLLSGP. Positions 450 to 471 are calmodulin-binding; sequence KSETPGQTQPPLPNLRPKTGGD. The span at 491–501 shows a compositional bias: polar residues; the sequence is QSQSRDLLSGP.

It belongs to the MLO family.

The protein resides in the membrane. Its function is as follows. May be involved in modulation of pathogen defense and leaf cell death. Activity seems to be regulated by Ca(2+)-dependent calmodulin binding and seems not to require heterotrimeric G proteins. This is MLO-like protein 5 (MLO5) from Arabidopsis thaliana (Mouse-ear cress).